Reading from the N-terminus, the 220-residue chain is Putative cobalt transport protein CbiM (220 aa).

The next 5 membrane-spanning stretches (helical) occupy residues glycine 6 to tyrosine 26, alanine 43 to valine 63, glycine 74 to leucine 94, leucine 98 to isoleucine 118, and isoleucine 182 to isoleucine 202.

Belongs to the CbiM family. In terms of assembly, forms an energy-coupling factor (ECF) transporter complex composed of an ATP-binding protein (A component, CbiO), a transmembrane protein (T component, CbiQ) and 2 possible substrate-capture proteins (S components, CbiM and CbiN) of unknown stoichimetry.

It is found in the cell membrane. It participates in cofactor biosynthesis; adenosylcobalamin biosynthesis. Functionally, part of the energy-coupling factor (ECF) transporter complex CbiMNOQ involved in cobalt import. This is Putative cobalt transport protein CbiM from Haloquadratum walsbyi (strain DSM 16790 / HBSQ001).